The sequence spans 541 residues: Chaperonin GroEL 2 (541 aa).

ATP-binding positions include 29–32, 86–90, G413, 476–478, and D492; these read TLGP, DGTTT, and NAA.

Belongs to the chaperonin (HSP60) family. Forms a cylinder of 14 subunits composed of two heptameric rings stacked back-to-back. Interacts with the co-chaperonin GroES.

It is found in the secreted. Its subcellular location is the capsule. It localises to the cell surface. The protein localises to the cell wall. It carries out the reaction ATP + H2O + a folded polypeptide = ADP + phosphate + an unfolded polypeptide.. Together with its co-chaperonin GroES, plays an essential role in assisting protein folding. The GroEL-GroES system forms a nano-cage that allows encapsulation of the non-native substrate proteins and provides a physical environment optimized to promote and accelerate protein folding. The chain is Chaperonin GroEL 2 from Mycolicibacterium vanbaalenii (strain DSM 7251 / JCM 13017 / BCRC 16820 / KCTC 9966 / NRRL B-24157 / PYR-1) (Mycobacterium vanbaalenii).